A 324-amino-acid polypeptide reads, in one-letter code: MSFLRFVGAILFLVAIFGASNAQLSATFYDTTCPNVTSIVRGVMDQRQRTDARAGAKIIRLHFHDCFVNGCDGSILLDTDGTQTEKDAPANVGAGGFDIVDDIKTALENVCPGVVSCADILALASEIGVVLAKGPSWQVLFGRKDSLTANRSGANSDIPSPFETLAVMIPQFTNKGMDLTDLVALSGAHTFGRARCGTFEQRLFNFNGSGNPDLTVDATFLQTLQGICPQGGNNGNTFTNLDISTPNDFDNDYFTNLQSNQGLLQTDQELFSTSGSATIAIVNRYAGSQTQFFDDFVSSMIKLGNISPLTGTNGQIRTDCKRVN.

Positions 1-22 (MSFLRFVGAILFLVAIFGASNA) are cleaved as a signal peptide. Position 23 is a pyrrolidone carboxylic acid (Gln23). 4 disulfide bridges follow: Cys33–Cys111, Cys66–Cys71, Cys117–Cys320, and Cys196–Cys228. Asn35 is a glycosylation site (N-linked (GlcNAc...) asparagine). The Proton acceptor role is filled by His64. Residues Asp65, Val68, Gly70, Asp72, and Ser74 each contribute to the Ca(2+) site. Asn150 carries an N-linked (GlcNAc...) asparagine glycan. Position 159 (Pro159) interacts with substrate. A heme b-binding site is contributed by His189. A Ca(2+)-binding site is contributed by Thr190. N-linked (GlcNAc...) asparagine glycosylation occurs at Asn207. Residues Asp242, Thr245, and Asp250 each contribute to the Ca(2+) site.

The protein belongs to the peroxidase family. Classical plant (class III) peroxidase subfamily. The cofactor is Ca(2+). Requires heme b as cofactor.

The protein resides in the secreted. It catalyses the reaction 2 a phenolic donor + H2O2 = 2 a phenolic radical donor + 2 H2O. Its function is as follows. Removal of H(2)O(2), oxidation of toxic reductants, biosynthesis and degradation of lignin, suberization, auxin catabolism, response to environmental stresses such as wounding, pathogen attack and oxidative stress. These functions might be dependent on each isozyme/isoform in each plant tissue. Plays an integral role in secondary cell wall biosynthesis by the polymerization of cinnamyl alcohols into lignin and by forming rigid cross-links between cellulose, pectin, hydroxy-proline-rich glycoproteins, and lignin. This Nicotiana tabacum (Common tobacco) protein is Lignin-forming anionic peroxidase.